The chain runs to 139 residues: ATP synthase epsilon chain (139 aa).

This sequence belongs to the ATPase epsilon chain family. In terms of assembly, F-type ATPases have 2 components, CF(1) - the catalytic core - and CF(0) - the membrane proton channel. CF(1) has five subunits: alpha(3), beta(3), gamma(1), delta(1), epsilon(1). CF(0) has three main subunits: a, b and c.

The protein localises to the cell inner membrane. Functionally, produces ATP from ADP in the presence of a proton gradient across the membrane. This Salmonella arizonae (strain ATCC BAA-731 / CDC346-86 / RSK2980) protein is ATP synthase epsilon chain.